Here is a 21-residue protein sequence, read N- to C-terminus: MNRISTTTITTITITTGNGAG.

The protein belongs to the thr operon leader peptide family.

This protein is involved in control of the biosynthesis of threonine. This is thr operon leader peptide from Salmonella choleraesuis (strain SC-B67).